The following is a 1025-amino-acid chain: Serine/threonine-protein kinase TAO2 (1025 aa).

The 254-residue stretch at 28-281 (FADLREIGHG…SDMLLKHRFL (254 aa)) folds into the Protein kinase domain. Residues 34 to 42 (IGHGSFGAV) and K57 contribute to the ATP site. D151 serves as the catalytic Proton acceptor. Low complexity predominate over residues 349–373 (ESSQSVPSMSISASSQSSSVNSLAD). Positions 349–377 (ESSQSVPSMSISASSQSSSVNSLADASDD) are disordered. 2 coiled-coil regions span residues 457–650 (SALR…ECAM) and 755–876 (ILKR…EIEA). Disordered stretches follow at residues 899–930 (FNQG…QNTG) and 945–1025 (SASW…LSYS). The segment covering 905 to 914 (APPPGWPSRP) has biased composition (pro residues). Low complexity predominate over residues 947–986 (SWGLHPPGSSSSLSALPSSSSSSSSSPSSSSGGRPGLLLL). A compositionally biased stretch (polar residues) spans 1007 to 1025 (SRSTSVTSQLSNGSHLSYS).

This sequence belongs to the protein kinase superfamily. STE Ser/Thr protein kinase family. STE20 subfamily. Requires Mg(2+) as cofactor.

The catalysed reaction is L-seryl-[protein] + ATP = O-phospho-L-seryl-[protein] + ADP + H(+). The enzyme catalyses L-threonyl-[protein] + ATP = O-phospho-L-threonyl-[protein] + ADP + H(+). Serine/threonine-protein kinase involved in different processes such as apoptotic morphological changes, MAPK8/JNK and MAPK14/p38 MAPK signaling pathway. Its function is as follows. Activates the JNK MAP kinase pathway. This chain is Serine/threonine-protein kinase TAO2 (taok2), found in Xenopus laevis (African clawed frog).